Reading from the N-terminus, the 480-residue chain is Protein disulfide-isomerase 5-4 (480 aa).

N-linked (GlcNAc...) asparagine glycans are attached at residues asparagine 74 and asparagine 99. Positions 120–263 (FHAGEVLSLI…LVKMVVSLVE (144 aa)) constitute a Thioredoxin domain. Residues cysteine 170 and cysteine 173 each act as nucleophile in the active site. Cysteines 170 and 173 form a disulfide. N-linked (GlcNAc...) asparagine glycosylation is found at asparagine 280, asparagine 326, and asparagine 376. Residues 439–459 (FSHFITNVCAIIGGVFTVAGI) form a helical membrane-spanning segment.

It belongs to the protein disulfide isomerase family. Widely expressed.

The protein localises to the membrane. In terms of biological role, acts as a protein-folding catalyst that interacts with nascent polypeptides to catalyze the formation, isomerization, and reduction or oxidation of disulfide bonds. The sequence is that of Protein disulfide-isomerase 5-4 (PDIL5-4) from Arabidopsis thaliana (Mouse-ear cress).